The chain runs to 504 residues: 2,3-bisphosphoglycerate-independent phosphoglycerate mutase (504 aa).

Mn(2+) is bound by residues aspartate 11 and serine 61. Serine 61 (phosphoserine intermediate) is an active-site residue. Substrate is bound by residues histidine 122, 152 to 153 (RD), arginine 183, arginine 189, 255 to 258 (RNDR), and lysine 329. Mn(2+)-binding residues include aspartate 396, histidine 400, aspartate 437, histidine 438, and histidine 455.

It belongs to the BPG-independent phosphoglycerate mutase family. Monomer. Mn(2+) serves as cofactor.

It carries out the reaction (2R)-2-phosphoglycerate = (2R)-3-phosphoglycerate. It functions in the pathway carbohydrate degradation; glycolysis; pyruvate from D-glyceraldehyde 3-phosphate: step 3/5. Its function is as follows. Catalyzes the interconversion of 2-phosphoglycerate and 3-phosphoglycerate. This is 2,3-bisphosphoglycerate-independent phosphoglycerate mutase from Bacteroides fragilis (strain ATCC 25285 / DSM 2151 / CCUG 4856 / JCM 11019 / LMG 10263 / NCTC 9343 / Onslow / VPI 2553 / EN-2).